A 447-amino-acid chain; its full sequence is Asparagine--tRNA ligase (447 aa).

It belongs to the class-II aminoacyl-tRNA synthetase family. In terms of assembly, homodimer.

Its subcellular location is the cytoplasm. It catalyses the reaction tRNA(Asn) + L-asparagine + ATP = L-asparaginyl-tRNA(Asn) + AMP + diphosphate + H(+). This Lactococcus lactis subsp. cremoris (strain MG1363) protein is Asparagine--tRNA ligase.